Consider the following 738-residue polypeptide: Prolyl oligopeptidase A (738 aa).

Active-site charge relay system residues include Ser581, Asp665, and His701.

It belongs to the peptidase S9A family. Monomer.

It catalyses the reaction Hydrolysis of Pro-|-Xaa &gt;&gt; Ala-|-Xaa in oligopeptides.. Its function is as follows. Housekeeping prolyl oligopeptidase (POP) that behaves like a conventional POP by cleaving peptide bonds on the C-terminal side of prolyl residues within peptides that are up to approximately 30 amino acids long. In Galerina marginata (strain CBS 339.88), this protein is Prolyl oligopeptidase A.